The sequence spans 393 residues: S-adenosylmethionine synthase (393 aa).

Histidine 17 provides a ligand contact to ATP. Aspartate 19 is a Mg(2+) binding site. Glutamate 45 contributes to the K(+) binding site. Residues glutamate 58 and glutamine 104 each coordinate L-methionine. Positions 104–114 (QSAEIAQGVEE) are flexible loop. ATP-binding positions include 171-173 (DAK), aspartate 245, 251-252 (RK), alanine 268, and lysine 272. Aspartate 245 contacts L-methionine. L-methionine is bound at residue lysine 276.

It belongs to the AdoMet synthase family. Homotetramer; dimer of dimers. Requires Mg(2+) as cofactor. It depends on K(+) as a cofactor.

Its subcellular location is the cytoplasm. It catalyses the reaction L-methionine + ATP + H2O = S-adenosyl-L-methionine + phosphate + diphosphate. It functions in the pathway amino-acid biosynthesis; S-adenosyl-L-methionine biosynthesis; S-adenosyl-L-methionine from L-methionine: step 1/1. Catalyzes the formation of S-adenosylmethionine (AdoMet) from methionine and ATP. The overall synthetic reaction is composed of two sequential steps, AdoMet formation and the subsequent tripolyphosphate hydrolysis which occurs prior to release of AdoMet from the enzyme. This is S-adenosylmethionine synthase from Hyphomonas neptunium (strain ATCC 15444).